A 212-amino-acid chain; its full sequence is Probable transaldolase (212 aa).

Lys84 serves as the catalytic Schiff-base intermediate with substrate.

It belongs to the transaldolase family. Type 3B subfamily.

Its subcellular location is the cytoplasm. The enzyme catalyses D-sedoheptulose 7-phosphate + D-glyceraldehyde 3-phosphate = D-erythrose 4-phosphate + beta-D-fructose 6-phosphate. It participates in carbohydrate degradation; pentose phosphate pathway; D-glyceraldehyde 3-phosphate and beta-D-fructose 6-phosphate from D-ribose 5-phosphate and D-xylulose 5-phosphate (non-oxidative stage): step 2/3. Its function is as follows. Transaldolase is important for the balance of metabolites in the pentose-phosphate pathway. This chain is Probable transaldolase, found in Bacillus pumilus (strain SAFR-032).